The chain runs to 238 residues: ATP synthase subunit a (238 aa).

5 consecutive transmembrane segments (helical) span residues 15 to 35 (IFNL…FVFI), 76 to 96 (YSLF…LGLM), 111 to 131 (PTAN…LTHI), 167 to 187 (LALR…LLLL), and 208 to 230 (AFSV…VYLG).

It belongs to the ATPase A chain family. F-type ATPases have 2 components, CF(1) - the catalytic core - and CF(0) - the membrane proton channel. CF(1) has five subunits: alpha(3), beta(3), gamma(1), delta(1), epsilon(1). CF(0) has three main subunits: a(1), b(2) and c(9-12). The alpha and beta chains form an alternating ring which encloses part of the gamma chain. CF(1) is attached to CF(0) by a central stalk formed by the gamma and epsilon chains, while a peripheral stalk is formed by the delta and b chains.

It localises to the cell membrane. In terms of biological role, key component of the proton channel; it plays a direct role in the translocation of protons across the membrane. The sequence is that of ATP synthase subunit a from Streptococcus pneumoniae (strain 70585).